The primary structure comprises 85 residues: Large ribosomal subunit protein bL27 (85 aa).

The protein belongs to the bacterial ribosomal protein bL27 family.

The protein is Large ribosomal subunit protein bL27 of Leptospira biflexa serovar Patoc (strain Patoc 1 / Ames).